Here is a 143-residue protein sequence, read N- to C-terminus: Large ribosomal subunit protein uL11 (143 aa).

The protein belongs to the universal ribosomal protein uL11 family. As to quaternary structure, part of the ribosomal stalk of the 50S ribosomal subunit. Interacts with L10 and the large rRNA to form the base of the stalk. L10 forms an elongated spine to which L12 dimers bind in a sequential fashion forming a multimeric L10(L12)X complex. In terms of processing, one or more lysine residues are methylated.

Functionally, forms part of the ribosomal stalk which helps the ribosome interact with GTP-bound translation factors. The sequence is that of Large ribosomal subunit protein uL11 from Methylibium petroleiphilum (strain ATCC BAA-1232 / LMG 22953 / PM1).